The following is a 134-amino-acid chain: Photosystem II assembly factor lipoprotein Psb27 (134 aa).

Residues 1–21 (MKRFWAMVCALFLSVSLLLTS) form the signal peptide. The N-palmitoyl cysteine moiety is linked to residue Cys-22. Cys-22 is lipidated: S-diacylglycerol cysteine.

It belongs to the Psb27 family. As to quaternary structure, part of a photosystem II (PSII) assembly intermediate complex PSII-I; crystallized from a strain deleted of psbJ, it forms monomeric PSII before addition of the oxygen evolving complex. PSII-I includes 3 assembly factors not found in mature PSII (Psb27, Psb28 and Psb34). Binds to the lumenal side of PSII, adjacent to the CP43 (psbC) subunit.

It localises to the cellular thylakoid membrane. Functionally, plays a role in the repair and/or biogenesis of the calcium-manganese-oxide cluster on the lumenal face of the thylakoid membrane. Its presence in a photosystem II (PSII) preparation prevents binding of other extrinsic subunits PsbO, PsbU and PsbV, and thus assembly of calcium-manganese-oxide cluster. Psb27-containing complexes lack oxygen evolving activity and an oxidizable calcium-manganese-oxide cluster, but have a normal reaction center. The sequence is that of Photosystem II assembly factor lipoprotein Psb27 from Thermosynechococcus vestitus (strain NIES-2133 / IAM M-273 / BP-1).